The chain runs to 758 residues: UPF0313 protein CV_1738 (758 aa).

In terms of domain architecture, Radical SAM core spans 377-642 (AWEMIKYSVN…VDVVRDGYRR (266 aa)). Cysteine 391, cysteine 395, and cysteine 398 together coordinate [4Fe-4S] cluster. Residues 698 to 758 (GAPMNRGKSP…KPGGKTSRSR (61 aa)) are disordered. Residues 727 to 737 (RGQGGQGGRPG) show a composition bias toward gly residues.

Belongs to the UPF0313 family. Requires [4Fe-4S] cluster as cofactor.

The chain is UPF0313 protein CV_1738 from Chromobacterium violaceum (strain ATCC 12472 / DSM 30191 / JCM 1249 / CCUG 213 / NBRC 12614 / NCIMB 9131 / NCTC 9757 / MK).